Consider the following 433-residue polypeptide: G2/mitotic-specific cyclin-B1 (433 aa).

Positions 19-47 (INMAGAKRVPTAPAATSKPGLRPRTALGD) are disordered. Lysine 73 carries the post-translational modification N6-acetyllysine. A disordered region spans residues 93–116 (PVSEPVPEPEPEPEPEPVKEEKLS). Serine 126 is subject to Phosphoserine; by CDK1. The residue at position 128 (serine 128) is a Phosphoserine. At serine 133 the chain carries Phosphoserine; by PLK1. Serine 147 carries the phosphoserine modification. Interaction with CDK2 regions lie at residues 169-177 (EYVKDIYAY) and 258-261 (YEEM). Threonine 321 bears the Phosphothreonine mark.

The protein belongs to the cyclin family. Cyclin AB subfamily. In terms of assembly, interacts with the CDC2 protein kinase to form a serine/threonine kinase holoenzyme complex also known as maturation promoting factor (MPF). The cyclin subunit imparts substrate specificity to the complex. Binds HEI10. Interacts with catalytically active RALBP1 and CDC2 during mitosis to form an endocytotic complex during interphase. Interacts with CCNF; interaction is required for nuclear localization. Interacts with CDK5RAP3. Interacts with RFPL4A and UBE2A. Interacts with INCA1. Post-translationally, ubiquitinated by the SCF(NIPA) complex during interphase, leading to its destruction. Deubiquitinated by USP22 during G2/M phase. In terms of processing, phosphorylated by PLK1 at Ser-133 on centrosomes during prophase: phosphorylation by PLK1 does not cause nuclear import. Phosphorylation at Ser-147 was also reported to be mediated by PLK1 but Ser-133 seems to be the primary phosphorylation site.

It localises to the cytoplasm. The protein localises to the nucleus. Its subcellular location is the cytoskeleton. It is found in the microtubule organizing center. The protein resides in the centrosome. Its function is as follows. Essential for the control of the cell cycle at the G2/M (mitosis) transition. This is G2/mitotic-specific cyclin-B1 (CCNB1) from Homo sapiens (Human).